Reading from the N-terminus, the 346-residue chain is Methylthioribose-1-phosphate isomerase (346 aa).

Substrate is bound by residues 46 to 48 (RGA), Arg-89, and Gln-196. Asp-237 acts as the Proton donor in catalysis. 247 to 248 (NK) contributes to the substrate binding site.

This sequence belongs to the eIF-2B alpha/beta/delta subunits family. MtnA subfamily.

The enzyme catalyses 5-(methylsulfanyl)-alpha-D-ribose 1-phosphate = 5-(methylsulfanyl)-D-ribulose 1-phosphate. Its pathway is amino-acid biosynthesis; L-methionine biosynthesis via salvage pathway; L-methionine from S-methyl-5-thio-alpha-D-ribose 1-phosphate: step 1/6. Its function is as follows. Catalyzes the interconversion of methylthioribose-1-phosphate (MTR-1-P) into methylthioribulose-1-phosphate (MTRu-1-P). The chain is Methylthioribose-1-phosphate isomerase from Geotalea uraniireducens (strain Rf4) (Geobacter uraniireducens).